We begin with the raw amino-acid sequence, 354 residues long: ATP-dependent (S)-NAD(P)H-hydrate dehydratase (354 aa).

One can recognise a YjeF C-terminal domain in the interval alanine 42–isoleucine 350. Residues glycine 155 and asparagine 208–arginine 214 each bind (6S)-NADPHX. ATP is bound by residues lysine 248 to aspartate 252 and glycine 267 to glycine 276. Aspartate 277 provides a ligand contact to (6S)-NADPHX.

It belongs to the NnrD/CARKD family. Mg(2+) serves as cofactor.

The catalysed reaction is (6S)-NADHX + ATP = ADP + phosphate + NADH + H(+). The enzyme catalyses (6S)-NADPHX + ATP = ADP + phosphate + NADPH + H(+). Its function is as follows. Catalyzes the dehydration of the S-form of NAD(P)HX at the expense of ATP, which is converted to ADP. Together with NAD(P)HX epimerase, which catalyzes the epimerization of the S- and R-forms, the enzyme allows the repair of both epimers of NAD(P)HX, a damaged form of NAD(P)H that is a result of enzymatic or heat-dependent hydration. In Vitis vinifera (Grape), this protein is ATP-dependent (S)-NAD(P)H-hydrate dehydratase.